A 200-amino-acid chain; its full sequence is Ras-related protein RHN1 (200 aa).

GTP contacts are provided by residues Gly-17–Ser-25, Leu-36–Thr-42, Asp-65–Gln-69, Asn-123–Asp-126, and Ser-153–Lys-155. Residues Gln-39–Phe-47 carry the Effector region motif. S-geranylgeranyl cysteine attachment occurs at residues Cys-198 and Cys-199.

Belongs to the small GTPase superfamily. Rab family. As to expression, high in stem, root, and inflorescence.

The protein resides in the cell membrane. Protein transport. Probably involved in vesicular traffic. This chain is Ras-related protein RHN1 (RHN1), found in Nicotiana plumbaginifolia (Leadwort-leaved tobacco).